Here is a 364-residue protein sequence, read N- to C-terminus: Methylthioribose-1-phosphate isomerase (364 aa).

Residues Arg-46–Ala-48, Arg-89, and Gln-196 contribute to the substrate site. Asp-237 functions as the Proton donor in the catalytic mechanism. Asn-247 to Lys-248 provides a ligand contact to substrate.

The protein belongs to the eIF-2B alpha/beta/delta subunits family. MtnA subfamily.

It catalyses the reaction 5-(methylsulfanyl)-alpha-D-ribose 1-phosphate = 5-(methylsulfanyl)-D-ribulose 1-phosphate. It participates in amino-acid biosynthesis; L-methionine biosynthesis via salvage pathway; L-methionine from S-methyl-5-thio-alpha-D-ribose 1-phosphate: step 1/6. Catalyzes the interconversion of methylthioribose-1-phosphate (MTR-1-P) into methylthioribulose-1-phosphate (MTRu-1-P). The polypeptide is Methylthioribose-1-phosphate isomerase (Pelotomaculum thermopropionicum (strain DSM 13744 / JCM 10971 / SI)).